Consider the following 337-residue polypeptide: Mitochondrial glutathione transporter SLC25A40 (337 aa).

Solcar repeat units lie at residues 14 to 132 (VTPL…LSTF), 140 to 224 (NETR…LRRW), and 234 to 328 (STFM…GKGF). The next 6 helical transmembrane spans lie at 20–40 (MMAS…LDVV), 104–124 (LWSG…IYFT), 146–166 (IVAG…LELI), 200–221 (WAPT…YENL), 240–260 (FTAG…FDVV), and 299–319 (GLFT…AIMI).

This sequence belongs to the mitochondrial carrier (TC 2.A.29) family. Widely expressed at low level.

Its subcellular location is the mitochondrion inner membrane. The enzyme catalyses glutathione(in) = glutathione(out). Probable mitochondrial transporter required for glutathione import into mitochondria. Glutathione, which plays key roles in oxidative metabolism, is produced exclusively in the cytosol and is imported in many organelles. Mitochondrial glutathione is required for the activity and stability of proteins containing iron-sulfur clusters, as well as erythropoiesis. This chain is Mitochondrial glutathione transporter SLC25A40, found in Rattus norvegicus (Rat).